Here is a 103-residue protein sequence, read N- to C-terminus: MASRWAVQLLLVAAWSMGCGEALKCYTCKEPMTSASCRTITRCKPEDTACMTTLVTVEAEYPFNQSPVVTRSCSSSCVATDPDSIGAAHLIFCCFRDLCNSEL.

The N-terminal stretch at 1 to 22 (MASRWAVQLLLVAAWSMGCGEA) is a signal peptide. The UPAR/Ly6 domain occupies 24–73 (KCYTCKEPMTSASCRTITRCKPEDTACMTTLVTVEAEYPFNQSPVVTRSC). 5 disulfide bridges follow: Cys-25/Cys-50, Cys-28/Cys-37, Cys-43/Cys-73, Cys-77/Cys-93, and Cys-94/Cys-99.

In terms of assembly, homodimer. Interacts with PLAU. Interacts with CHRNA7. In terms of tissue distribution, granulocytes. Expressed in skin. Predominantly expressed in the granular layer of skin, notably the acrosyringium. Identified in several biological fluids such as sweat, saliva, tears, plasma and urine.

It localises to the secreted. Its function is as follows. Has an antitumor activity. Was found to be a marker of late differentiation of the skin. Implicated in maintaining the physiological and structural integrity of the keratinocyte layers of the skin. In vitro down-regulates keratinocyte proliferation; the function may involve the proposed role as modulator of nicotinic acetylcholine receptors (nAChRs) activity. In vitro inhibits alpha-7-dependent nAChR currents in an allosteric manner. In T cells may be involved in regulation of intracellular Ca(2+) signaling. Seems to have an immunomodulatory function in the cornea. The function may implicate a possible role as a scavenger receptor for PLAU thereby blocking PLAU-dependent functions of PLAUR such as in cell migration and proliferation. This chain is Secreted Ly-6/uPAR-related protein 1 (SLURP1), found in Homo sapiens (Human).